Here is a 151-residue protein sequence, read N- to C-terminus: Small ribosomal subunit protein bS6 (151 aa).

A disordered region spans residues 94–151; that stretch reads EEHEQGPSAMMRKRDDDDRGERGERPRGPRPERGERGERGERGPRRPREDNIGEEGLY. The span at 105–144 shows a compositional bias: basic and acidic residues; sequence RKRDDDDRGERGERPRGPRPERGERGERGERGPRRPREDN.

The protein belongs to the bacterial ribosomal protein bS6 family.

Its function is as follows. Binds together with bS18 to 16S ribosomal RNA. This chain is Small ribosomal subunit protein bS6, found in Beijerinckia indica subsp. indica (strain ATCC 9039 / DSM 1715 / NCIMB 8712).